Here is a 232-residue protein sequence, read N- to C-terminus: Large ribosomal subunit protein uL1 (232 aa).

It belongs to the universal ribosomal protein uL1 family. In terms of assembly, part of the 50S ribosomal subunit.

Its function is as follows. Binds directly to 23S rRNA. The L1 stalk is quite mobile in the ribosome, and is involved in E site tRNA release. In terms of biological role, protein L1 is also a translational repressor protein, it controls the translation of the L11 operon by binding to its mRNA. The polypeptide is Large ribosomal subunit protein uL1 (Coxiella burnetii (strain CbuK_Q154) (Coxiella burnetii (strain Q154))).